Reading from the N-terminus, the 350-residue chain is Heat-inducible transcription repressor HrcA (350 aa).

Belongs to the HrcA family.

Its function is as follows. Negative regulator of class I heat shock genes (grpE-dnaK-dnaJ and groELS operons). Prevents heat-shock induction of these operons. This Xanthomonas oryzae pv. oryzae (strain KACC10331 / KXO85) protein is Heat-inducible transcription repressor HrcA.